A 610-amino-acid polypeptide reads, in one-letter code: UvrABC system protein C (610 aa).

Positions 16 to 94 constitute a GIY-YIG domain; the sequence is SQPGVYRMYD…IKLYQPRYNV (79 aa). Positions 204 to 239 constitute a UVR domain; the sequence is DQVLTQLISRMETASQNLEFEEAARIRDQIQAVRRV.

The protein belongs to the UvrC family. In terms of assembly, interacts with UvrB in an incision complex.

Its subcellular location is the cytoplasm. In terms of biological role, the UvrABC repair system catalyzes the recognition and processing of DNA lesions. UvrC both incises the 5' and 3' sides of the lesion. The N-terminal half is responsible for the 3' incision and the C-terminal half is responsible for the 5' incision. This is UvrABC system protein C from Escherichia coli O139:H28 (strain E24377A / ETEC).